The sequence spans 336 residues: Holliday junction branch migration complex subunit RuvB (336 aa).

The segment at 1-185 (MSIIVERLLS…FGVLSRVEYY (185 aa)) is large ATPase domain (RuvB-L). ATP contacts are provided by residues L24, R25, G66, K69, T70, T71, 132–134 (EDF), R175, Y185, and R222. Residue T70 coordinates Mg(2+). A small ATPAse domain (RuvB-S) region spans residues 186 to 256 (TVDQLSAIVE…ITQMALELLQ (71 aa)). The head domain (RuvB-H) stretch occupies residues 259 to 336 (KLGLDHIDHK…EHFGMEIPKV (78 aa)). The DNA site is built by R314 and R319.

The protein belongs to the RuvB family. In terms of assembly, homohexamer. Forms an RuvA(8)-RuvB(12)-Holliday junction (HJ) complex. HJ DNA is sandwiched between 2 RuvA tetramers; dsDNA enters through RuvA and exits via RuvB. An RuvB hexamer assembles on each DNA strand where it exits the tetramer. Each RuvB hexamer is contacted by two RuvA subunits (via domain III) on 2 adjacent RuvB subunits; this complex drives branch migration. In the full resolvosome a probable DNA-RuvA(4)-RuvB(12)-RuvC(2) complex forms which resolves the HJ.

It is found in the cytoplasm. The catalysed reaction is ATP + H2O = ADP + phosphate + H(+). In terms of biological role, the RuvA-RuvB-RuvC complex processes Holliday junction (HJ) DNA during genetic recombination and DNA repair, while the RuvA-RuvB complex plays an important role in the rescue of blocked DNA replication forks via replication fork reversal (RFR). RuvA specifically binds to HJ cruciform DNA, conferring on it an open structure. The RuvB hexamer acts as an ATP-dependent pump, pulling dsDNA into and through the RuvAB complex. RuvB forms 2 homohexamers on either side of HJ DNA bound by 1 or 2 RuvA tetramers; 4 subunits per hexamer contact DNA at a time. Coordinated motions by a converter formed by DNA-disengaged RuvB subunits stimulates ATP hydrolysis and nucleotide exchange. Immobilization of the converter enables RuvB to convert the ATP-contained energy into a lever motion, pulling 2 nucleotides of DNA out of the RuvA tetramer per ATP hydrolyzed, thus driving DNA branch migration. The RuvB motors rotate together with the DNA substrate, which together with the progressing nucleotide cycle form the mechanistic basis for DNA recombination by continuous HJ branch migration. Branch migration allows RuvC to scan DNA until it finds its consensus sequence, where it cleaves and resolves cruciform DNA. This is Holliday junction branch migration complex subunit RuvB from Bacillus cereus (strain ATCC 14579 / DSM 31 / CCUG 7414 / JCM 2152 / NBRC 15305 / NCIMB 9373 / NCTC 2599 / NRRL B-3711).